The sequence spans 469 residues: MGKTLYQKLFDAHVVYEAEGETPILYINRHLIHEVTSPQAFDGLRVAGRQVRQVNKTFGTMDHSISTQVRDVNLLEGQAKIQVLELDKNCKATGIELFDMNTKQQGIVHVMGPEQGLTLPGMTIVCGDSHTATHGAFGALAFGIGTSEVEHVLATQTLKQARAKNMKVEVRGKVNPGITAKDIVLAIIGKTTMAGGTGHVVEFCGEAIRDLSMEGRMTVCNMAIEFGAKAGLIAPDETTFEYLKDRPHAPKGKDWDDAIEYWKTLKSDDDAQFDTVVVLEAKDIAPQVTWGTNPGQVIAIDQLVPNPAEMSDPVTKTSAEKALAYIGLQANTDLKDVPVDQVFIGSCTNSRIEDLRAAAAVMKGRKKADNVKRVLVVPGSGLVKEQAEKEGLDKIFIAAGAEWRNPGCSMCLGMNDDRLGEWERCASTSNRNFEGRQGRNGRTHLVSPAMAAAAAVFGKFVDIRTIKLN.

[4Fe-4S] cluster is bound by residues Cys-347, Cys-408, and Cys-411.

This sequence belongs to the aconitase/IPM isomerase family. LeuC type 1 subfamily. In terms of assembly, heterodimer of LeuC and LeuD. [4Fe-4S] cluster serves as cofactor.

It catalyses the reaction (2R,3S)-3-isopropylmalate = (2S)-2-isopropylmalate. It functions in the pathway amino-acid biosynthesis; L-leucine biosynthesis; L-leucine from 3-methyl-2-oxobutanoate: step 2/4. Its function is as follows. Catalyzes the isomerization between 2-isopropylmalate and 3-isopropylmalate, via the formation of 2-isopropylmaleate. This is 3-isopropylmalate dehydratase large subunit from Actinobacillus succinogenes (strain ATCC 55618 / DSM 22257 / CCUG 43843 / 130Z).